Here is a 352-residue protein sequence, read N- to C-terminus: uncharacterized protein (352 aa).

It to M.pneumoniae MPN_633 (in the N-terminal section), and M.pneumoniae MPN_634 (in the C-terminal section).

This is an uncharacterized protein from Mycoplasma pneumoniae (strain ATCC 29342 / M129 / Subtype 1) (Mycoplasmoides pneumoniae).